Here is a 219-residue protein sequence, read N- to C-terminus: MTLNIILLGPPGAGKGTQASRLEDEHGMVQLSTGDMLRAAVKAGTPIGLQAKAVMDAGELVSDAIVSGLIGERLDELGPDVSVIFDGYPRTAAQADALDGILSARGRTLDHVIELVVDEDALVDRITGRFSCARCGEGYHDRYKLPKVADICDVCGSKEFKRRPDDNEDTVRTRMVEYRAKTAPILPIYEARGIVTRVDGMAPIDRVNDAIETILGTAG.

12–17 provides a ligand contact to ATP; that stretch reads GAGKGT. Residues 32-61 form an NMP region; sequence STGDMLRAAVKAGTPIGLQAKAVMDAGELV. AMP contacts are provided by residues threonine 33, arginine 38, 59-61, 87-90, and glutamine 94; these read ELV and GYPR. Positions 128–165 are LID; that stretch reads GRFSCARCGEGYHDRYKLPKVADICDVCGSKEFKRRPD. An ATP-binding site is contributed by arginine 129. Positions 132, 135, 152, and 155 each coordinate Zn(2+). AMP is bound by residues arginine 162 and arginine 174. Alanine 202 provides a ligand contact to ATP.

This sequence belongs to the adenylate kinase family. In terms of assembly, monomer.

The protein localises to the cytoplasm. The catalysed reaction is AMP + ATP = 2 ADP. It functions in the pathway purine metabolism; AMP biosynthesis via salvage pathway; AMP from ADP: step 1/1. Functionally, catalyzes the reversible transfer of the terminal phosphate group between ATP and AMP. Plays an important role in cellular energy homeostasis and in adenine nucleotide metabolism. The polypeptide is Adenylate kinase (Sphingopyxis alaskensis (strain DSM 13593 / LMG 18877 / RB2256) (Sphingomonas alaskensis)).